We begin with the raw amino-acid sequence, 168 residues long: N-alpha-acetyltransferase (168 aa).

The region spanning Tyr-13–Leu-168 is the N-acetyltransferase domain. Position 38 (Tyr-38) interacts with substrate. His-89 is a Zn(2+) binding site. Residues Ile-93–Val-95 and Lys-101–Thr-106 contribute to the acetyl-CoA site. Residues Ile-93–Val-95 and Lys-101–Thr-106 contribute to the CoA site. A Zn(2+)-binding site is contributed by Glu-128. Residues Asn-133 and Tyr-140–Lys-142 contribute to the acetyl-CoA site. Asn-133 is a CoA binding site. Tyr-155 is a substrate binding site.

It belongs to the acetyltransferase family. ARD1 subfamily. Homodimer.

The protein resides in the cytoplasm. The catalysed reaction is N-terminal L-alanyl-[protein] + acetyl-CoA = N-terminal N(alpha)-acetyl-L-alanyl-[protein] + CoA + H(+). The enzyme catalyses N-terminal L-seryl-[protein] + acetyl-CoA = N-terminal N(alpha)-acetyl-L-seryl-[protein] + CoA + H(+). It carries out the reaction N-terminal L-methionyl-L-leucyl-[protein] + acetyl-CoA = N-terminal N(alpha)-acetyl-L-methionyl-L-leucyl-[protein] + CoA + H(+). It catalyses the reaction N-terminal L-methionyl-L-glutamyl-[protein] + acetyl-CoA = N-terminal N(alpha)-acetyl-L-methionyl-L-glutamyl-[protein] + CoA + H(+). Its function is as follows. Displays alpha (N-terminal) acetyltransferase activity. Catalyzes the covalent attachment of an acetyl moiety from acetyl-CoA to the free alpha-amino group at the N-terminus of a protein. The protein is N-alpha-acetyltransferase of Sulfolobus acidocaldarius (strain ATCC 33909 / DSM 639 / JCM 8929 / NBRC 15157 / NCIMB 11770).